We begin with the raw amino-acid sequence, 425 residues long: MLDLKFIRDNLDLVKKSIKARGLVLDIDKLVYLDDKRKKIITQIGELNAKRNENSSKMRENLDNVFKSSLMETGKILKKQLIDLEEELKKISFDFDLENKRVPNILSPDVPIGNSEEDNFEIKKVGVVPKFDFKPKDHLELGRDLDLLDFDRAREVSGSKFYYLKNEAVFLEIALINFSLNKLREKGFDVFITPDVAREFIVDGIGFNPRGDESNIYKIESTDKYLVGTSEITLGGYYYNKIIDLTLPIKMAGFSHCFRKEAGAYGQLSKGLYRVHQFSKVEMFCFCKAEESQVIHDEFLSIQEQIFTELEIPYRVLNICSFDLGSPAYKKYDIEAWMPGRDGKGSYGEVTSTSNCTDYQSRRLKIRYKDQDGQNKFAHMVNGTAIATTRVIISILENFQDEKGGVRIPKSLVKYTGFGYIPFKN.

Residue 229–231 coordinates L-serine; that stretch reads TSE. ATP is bound by residues 259–261 and V275; that span reads RKE. E282 contributes to the L-serine binding site. Residue 349–352 coordinates ATP; sequence EVTS. T384 provides a ligand contact to L-serine.

It belongs to the class-II aminoacyl-tRNA synthetase family. Type-1 seryl-tRNA synthetase subfamily. Homodimer. The tRNA molecule binds across the dimer.

The protein localises to the cytoplasm. It carries out the reaction tRNA(Ser) + L-serine + ATP = L-seryl-tRNA(Ser) + AMP + diphosphate + H(+). The catalysed reaction is tRNA(Sec) + L-serine + ATP = L-seryl-tRNA(Sec) + AMP + diphosphate + H(+). It participates in aminoacyl-tRNA biosynthesis; selenocysteinyl-tRNA(Sec) biosynthesis; L-seryl-tRNA(Sec) from L-serine and tRNA(Sec): step 1/1. Catalyzes the attachment of serine to tRNA(Ser). Is also able to aminoacylate tRNA(Sec) with serine, to form the misacylated tRNA L-seryl-tRNA(Sec), which will be further converted into selenocysteinyl-tRNA(Sec). The protein is Serine--tRNA ligase of Borrelia garinii subsp. bavariensis (strain ATCC BAA-2496 / DSM 23469 / PBi) (Borreliella bavariensis).